The chain runs to 408 residues: Lysosome-associated membrane glycoprotein 3 (408 aa).

An N-terminal signal peptide occupies residues 1 to 20 (MPGQTSAVAVLLCLAVILHG). At 21-373 (YQIREKEFPE…IVDECLSDYT (353 aa)) the chain is on the lumenal side. 2 N-linked (GlcNAc...) asparagine glycosylation sites follow: N55 and N225. An intrachain disulfide couples C230 to C267. An N-linked (GlcNAc...) asparagine glycan is attached at N284. C331 and C368 are joined by a disulfide. A helical membrane pass occupies residues 374–394 (VVLPVVGIIVVVLCVVGLGIY). The Cytoplasmic segment spans residues 395–408 (KIRQRRQSSAYQRI).

It belongs to the LAMP family. As to quaternary structure, monomer. Interacts with FURIN.

It localises to the cell surface. The protein localises to the lysosome membrane. It is found in the cytoplasmic vesicle membrane. The protein resides in the early endosome membrane. Lysosomal membrane glycoprotein which plays a role in the unfolded protein response (UPR) that contributes to protein degradation and cell survival during proteasomal dysfunction. Plays a role in the process of fusion of the lysosome with the autophagosome, thereby modulating the autophagic process. Promotes hepatocellular lipogenesis through activation of the PI3K/Akt pathway. May also play a role in dendritic cell function and in adaptive immunity. The polypeptide is Lysosome-associated membrane glycoprotein 3 (Lamp3) (Rattus norvegicus (Rat)).